Here is a 225-residue protein sequence, read N- to C-terminus: 2-C-methyl-D-erythritol 4-phosphate cytidylyltransferase (225 aa).

Belongs to the IspD/TarI cytidylyltransferase family. IspD subfamily.

It catalyses the reaction 2-C-methyl-D-erythritol 4-phosphate + CTP + H(+) = 4-CDP-2-C-methyl-D-erythritol + diphosphate. The protein operates within isoprenoid biosynthesis; isopentenyl diphosphate biosynthesis via DXP pathway; isopentenyl diphosphate from 1-deoxy-D-xylulose 5-phosphate: step 2/6. Catalyzes the formation of 4-diphosphocytidyl-2-C-methyl-D-erythritol from CTP and 2-C-methyl-D-erythritol 4-phosphate (MEP). In Clostridium perfringens (strain SM101 / Type A), this protein is 2-C-methyl-D-erythritol 4-phosphate cytidylyltransferase.